Reading from the N-terminus, the 428-residue chain is ORC1-type DNA replication protein 5 (428 aa).

ATP is bound by residues 62–66, Tyr219, and Arg231; that span reads TGKSL.

This sequence belongs to the CDC6/cdc18 family.

In terms of biological role, involved in regulation of DNA replication. The sequence is that of ORC1-type DNA replication protein 5 (orc5) from Halobacterium salinarum (strain ATCC 700922 / JCM 11081 / NRC-1) (Halobacterium halobium).